Reading from the N-terminus, the 249-residue chain is Transcription repressor MYB5 (249 aa).

2 consecutive HTH myb-type domains span residues Lys20–Leu72 and Arg73–Leu127. DNA-binding regions (H-T-H motif) lie at residues Trp48 to Leu72 and Trp100 to Leu123. The disordered stretch occupies residues Asp133–Ser180. Residues Gln135–Glu150 are compositionally biased toward basic and acidic residues.

In terms of assembly, interacts with BHLH002/EGL3/MYC146, BHLH012/MYC1 and BHLH042/TT8. As to expression, siliques.

Its subcellular location is the nucleus. Transcription activator, when associated with BHLH002/EGL3/MYC146, BHLH012/MYC1 or BHLH042/TT8. In Arabidopsis thaliana (Mouse-ear cress), this protein is Transcription repressor MYB5 (MYB5).